Consider the following 169-residue polypeptide: Myosin regulatory light chain 11 (169 aa).

A2 is subject to N,N,N-trimethylalanine. Phosphoserine is present on residues S15 and S16. Phosphothreonine is present on residues T25 and T35. The EF-hand 1 domain occupies 25-60 (TQIQEFKEAFTVIDQNRDGIIDKEDLRDTFAAMGRL). Ca(2+)-binding residues include D38, N40, D42, and D49. S75 carries the phosphoserine modification. EF-hand domains lie at 95 to 130 (DPED…QCDR) and 131 to 166 (FSQE…GDAK). Phosphothreonine is present on T101.

In terms of assembly, myosin is a hexamer of 2 heavy chains and 4 light chains.

Myosin regulatory subunit that plays an essential role to maintain muscle integrity during early development. Plays a role in regulation of muscle contraction. The sequence is that of Myosin regulatory light chain 11 (Myl11) from Mus musculus (Mouse).